Consider the following 357-residue polypeptide: Ribosomal RNA large subunit methyltransferase M (357 aa).

Residues S183, 216-219 (APGG), D235, D255, and D271 each bind S-adenosyl-L-methionine. K300 acts as the Proton acceptor in catalysis.

This sequence belongs to the class I-like SAM-binding methyltransferase superfamily. RNA methyltransferase RlmE family. RlmM subfamily. In terms of assembly, monomer.

The protein localises to the cytoplasm. It carries out the reaction cytidine(2498) in 23S rRNA + S-adenosyl-L-methionine = 2'-O-methylcytidine(2498) in 23S rRNA + S-adenosyl-L-homocysteine + H(+). In terms of biological role, catalyzes the 2'-O-methylation at nucleotide C2498 in 23S rRNA. This chain is Ribosomal RNA large subunit methyltransferase M, found in Pseudomonas syringae pv. syringae (strain B728a).